A 101-amino-acid polypeptide reads, in one-letter code: Movement protein (101 aa).

The helical transmembrane segment at 30 to 50 (EVAILSFVALICIYLLYLWVL) threads the bilayer. The tract at residues 80-101 (PIPNTLEPTAPVHPGPFVPGQG) is disordered. The span at 90 to 101 (PVHPGPFVPGQG) shows a compositional bias: pro residues.

It belongs to the mastrevirus movement protein family. In terms of assembly, interacts with the capsid protein (CP). Part of a MP-CP-viral DNA complex.

It localises to the host membrane. Its function is as follows. Involved in the viral transport within, and between cells. The sequence is that of Movement protein from Avena sativa (Oat).